The chain runs to 286 residues: 33 kDa chaperonin (286 aa).

Cystine bridges form between Cys-233/Cys-235 and Cys-267/Cys-270.

Belongs to the HSP33 family. Under oxidizing conditions two disulfide bonds are formed involving the reactive cysteines. Under reducing conditions zinc is bound to the reactive cysteines and the protein is inactive.

It localises to the cytoplasm. Its function is as follows. Redox regulated molecular chaperone. Protects both thermally unfolding and oxidatively damaged proteins from irreversible aggregation. Plays an important role in the bacterial defense system toward oxidative stress. This Histophilus somni (strain 2336) (Haemophilus somnus) protein is 33 kDa chaperonin.